A 200-amino-acid polypeptide reads, in one-letter code: NADH-quinone oxidoreductase subunit C (200 aa).

This sequence belongs to the complex I 30 kDa subunit family. In terms of assembly, NDH-1 is composed of 14 different subunits. Subunits NuoB, C, D, E, F, and G constitute the peripheral sector of the complex.

The protein resides in the cell inner membrane. It carries out the reaction a quinone + NADH + 5 H(+)(in) = a quinol + NAD(+) + 4 H(+)(out). NDH-1 shuttles electrons from NADH, via FMN and iron-sulfur (Fe-S) centers, to quinones in the respiratory chain. The immediate electron acceptor for the enzyme in this species is believed to be ubiquinone. Couples the redox reaction to proton translocation (for every two electrons transferred, four hydrogen ions are translocated across the cytoplasmic membrane), and thus conserves the redox energy in a proton gradient. This Burkholderia vietnamiensis (strain G4 / LMG 22486) (Burkholderia cepacia (strain R1808)) protein is NADH-quinone oxidoreductase subunit C.